Here is a 313-residue protein sequence, read N- to C-terminus: 2-phosphoglycerate kinase (313 aa).

The ATP-cone domain occupies 8 to 95; the sequence is SRILVTDKEY…LWRRVLKKHS (88 aa).

Belongs to the 2-phosphoglycerate kinase family. The cofactor is a divalent metal cation.

The enzyme catalyses (2R)-2-phosphoglycerate + ATP = (2R)-2,3-bisphosphoglycerate + ADP + H(+). It functions in the pathway thermoadapter biosynthesis; cyclic 2,3-diphosphoglycerate biosynthesis; cyclic 2,3-diphosphoglycerate from 2-phospho-D-glycerate: step 1/2. Its function is as follows. Catalyzes the phosphorylation of 2-phosphoglycerate to 2,3-diphosphoglycerate. Involved in the biosynthesis of cyclic 2,3-bisphosphoglycerate, a thermoprotectant. This Methanococcus maripaludis (strain C6 / ATCC BAA-1332) protein is 2-phosphoglycerate kinase.